Consider the following 330-residue polypeptide: Protein TIFY 11f (330 aa).

A Tify 1 domain is found at 61–97 (EAAAAAQLKIMYGGRMLVFDDFFPAGGAVVELVRAAA). Residues 124 to 142 (PVVRKVSLQRFVEKRRRMR) carry the Jas motif. Residues 126 to 133 (VRKVSLQR) carry the Nuclear localization signal motif. The Tify 2 domain maps to 228-264 (EAAAAAQLKIMYGGRMLVFDDFFPAGGAVVELVRAAA). Residues 267–330 (GRDDDGARAR…SGRTDDAAFY (64 aa)) form a disordered region.

This sequence belongs to the TIFY/JAZ family. In terms of processing, ubiquitinated. Targeted for degradation by the SCF(COI1) E3 ubiquitin ligase-proteasome pathway during jasmonate signaling.

Its subcellular location is the nucleus. Functionally, repressor of jasmonate responses. In Oryza sativa subsp. japonica (Rice), this protein is Protein TIFY 11f.